The primary structure comprises 544 residues: Epidermal growth factor-like protein 6 (544 aa).

The N-terminal stretch at 1–30 (MAITGGMQSSDMVLLLWITVICACCSFVDS) is a signal peptide. The EGF-like 1 domain maps to 63 to 98 (RKGQCEAVCEQGCKHGECVGPNKCKCFPGFTGKNCN). Intrachain disulfides connect Cys67–Cys80, Cys71–Cys86, Cys88–Cys97, Cys104–Cys115, Cys111–Cys124, and Cys126–Cys138. An EGF-like 2; calcium-binding domain is found at 100 to 139 (DLNECGLKPRPCEHRCMNTHGSYKCYCLNGYMLMPDGSCS). Positions 144-178 (CAMANCQYGCEQVKGDIRCLCPSGGLQLGPDGRTC) constitute an EGF-like 3 domain. Residues 180-218 (DIDECAVGKASCPINRRCVNTFGSYYCKCQIGYELKYVN) enclose the EGF-like 4; calcium-binding domain. 5 cysteine pairs are disulfide-bonded: Cys184–Cys197, Cys191–Cys206, Cys229–Cys242, Cys236–Cys251, and Cys253–Cys264. Positions 225–265 (DINECLLNTHKCSINADCLNTQGSFKCRCKHGFKGNGQECS) constitute an EGF-like 5; calcium-binding domain. Positions 332–357 (GNDNDEEEGEIEEEEEEELDEEDEEN) are disordered. Residues 333–367 (NDNDEEEGEIEEEEEEELDEEDEENVIEEEKLLRG) are a coiled coil. Over residues 334–357 (DNDEEEGEIEEEEEEELDEEDEEN) the composition is skewed to acidic residues. One can recognise an MAM domain in the interval 399–543 (VDCRFDQGTC…VFLSSGPCSD (145 aa)).

The protein belongs to the nephronectin family.

The protein localises to the secreted. It is found in the extracellular space. It localises to the extracellular matrix. The protein resides in the basement membrane. In terms of biological role, may play a role in organ morphogenesis. Promotes matrix assembly. This is Epidermal growth factor-like protein 6 (egfl6) from Xenopus laevis (African clawed frog).